We begin with the raw amino-acid sequence, 271 residues long: Pyrroline-5-carboxylate reductase (271 aa).

The protein belongs to the pyrroline-5-carboxylate reductase family.

Its subcellular location is the cytoplasm. The catalysed reaction is L-proline + NADP(+) = (S)-1-pyrroline-5-carboxylate + NADPH + 2 H(+). The enzyme catalyses L-proline + NAD(+) = (S)-1-pyrroline-5-carboxylate + NADH + 2 H(+). It participates in amino-acid biosynthesis; L-proline biosynthesis; L-proline from L-glutamate 5-semialdehyde: step 1/1. Catalyzes the reduction of 1-pyrroline-5-carboxylate (PCA) to L-proline. This Staphylococcus haemolyticus (strain JCSC1435) protein is Pyrroline-5-carboxylate reductase.